Consider the following 393-residue polypeptide: Tryptophan synthase beta chain (393 aa).

The residue at position 86 (Lys86) is an N6-(pyridoxal phosphate)lysine.

Belongs to the TrpB family. In terms of assembly, tetramer of two alpha and two beta chains. The cofactor is pyridoxal 5'-phosphate.

The enzyme catalyses (1S,2R)-1-C-(indol-3-yl)glycerol 3-phosphate + L-serine = D-glyceraldehyde 3-phosphate + L-tryptophan + H2O. It functions in the pathway amino-acid biosynthesis; L-tryptophan biosynthesis; L-tryptophan from chorismate: step 5/5. The beta subunit is responsible for the synthesis of L-tryptophan from indole and L-serine. This chain is Tryptophan synthase beta chain, found in Alteromonas mediterranea (strain DSM 17117 / CIP 110805 / LMG 28347 / Deep ecotype).